The following is a 181-amino-acid chain: Malignant T-cell-amplified sequence 2 (181 aa).

The PUA domain maps to 92-171; the sequence is LPHQQVDKGA…IGIENIHYLN (80 aa).

The protein belongs to the MCTS1 family.

Its subcellular location is the cytoplasm. This Homo sapiens (Human) protein is Malignant T-cell-amplified sequence 2.